The sequence spans 292 residues: NAD kinase (292 aa).

Asp73 (proton acceptor) is an active-site residue. Residues 73-74 (DG), 147-148 (NE), His158, Arg175, Asp177, 188-193 (TAYSLS), and Gln247 each bind NAD(+).

The protein belongs to the NAD kinase family. It depends on a divalent metal cation as a cofactor.

It localises to the cytoplasm. It catalyses the reaction NAD(+) + ATP = ADP + NADP(+) + H(+). Functionally, involved in the regulation of the intracellular balance of NAD and NADP, and is a key enzyme in the biosynthesis of NADP. Catalyzes specifically the phosphorylation on 2'-hydroxyl of the adenosine moiety of NAD to yield NADP. This chain is NAD kinase, found in Edwardsiella ictaluri (strain 93-146).